A 495-amino-acid polypeptide reads, in one-letter code: GTPase Der (495 aa).

2 consecutive EngA-type G domains span residues 3 to 166 (PVIA…MDAE) and 208 to 381 (IKLA…DCST). GTP-binding positions include 9–16 (GRPNVGKS), 56–60 (DTGGI), 118–121 (NKTD), 214–221 (GRPNVGKS), 261–265 (DTAGV), and 326–329 (NKWD). Positions 382 to 466 (KRVGTSLLTR…PIRIQFKEGE (85 aa)) constitute a KH-like domain.

The protein belongs to the TRAFAC class TrmE-Era-EngA-EngB-Septin-like GTPase superfamily. EngA (Der) GTPase family. As to quaternary structure, associates with the 50S ribosomal subunit.

GTPase that plays an essential role in the late steps of ribosome biogenesis. This chain is GTPase Der, found in Yersinia pseudotuberculosis serotype O:3 (strain YPIII).